We begin with the raw amino-acid sequence, 189 residues long: Phosphoheptose isomerase (189 aa).

The SIS domain occupies 34–189; sequence LVAALKGGKK…CDLVEKGLFK (156 aa). 49–51 is a substrate binding site; sequence NGG. Zn(2+) contacts are provided by histidine 58 and glutamate 62. Residues glutamate 62, 91–92, 117–119, serine 122, and glutamine 169 contribute to the substrate site; these read ND and STS. The Zn(2+) site is built by glutamine 169 and histidine 177.

The protein belongs to the SIS family. GmhA subfamily. Homotetramer. Requires Zn(2+) as cofactor.

Its subcellular location is the cytoplasm. It catalyses the reaction 2 D-sedoheptulose 7-phosphate = D-glycero-alpha-D-manno-heptose 7-phosphate + D-glycero-beta-D-manno-heptose 7-phosphate. The protein operates within carbohydrate biosynthesis; D-glycero-D-manno-heptose 7-phosphate biosynthesis; D-glycero-alpha-D-manno-heptose 7-phosphate and D-glycero-beta-D-manno-heptose 7-phosphate from sedoheptulose 7-phosphate: step 1/1. Functionally, catalyzes the isomerization of sedoheptulose 7-phosphate in D-glycero-D-manno-heptose 7-phosphate. In Geobacter metallireducens (strain ATCC 53774 / DSM 7210 / GS-15), this protein is Phosphoheptose isomerase.